A 252-amino-acid chain; its full sequence is Ribonuclease HII (252 aa).

The 185-residue stretch at 68-252 (EYVAGLDEVG…FGPVRDRLRS (185 aa)) folds into the RNase H type-2 domain. Asp-74, Glu-75, and Asp-165 together coordinate a divalent metal cation.

It belongs to the RNase HII family. It depends on Mn(2+) as a cofactor. The cofactor is Mg(2+).

The protein localises to the cytoplasm. The catalysed reaction is Endonucleolytic cleavage to 5'-phosphomonoester.. Functionally, endonuclease that specifically degrades the RNA of RNA-DNA hybrids. This is Ribonuclease HII from Lacticaseibacillus paracasei (strain ATCC 334 / BCRC 17002 / CCUG 31169 / CIP 107868 / KCTC 3260 / NRRL B-441) (Lactobacillus paracasei).